The sequence spans 207 residues: 3-demethoxyubiquinol 3-hydroxylase (207 aa).

Fe cation contacts are provided by Glu56, Glu86, His89, Glu138, Glu170, and His173.

It belongs to the COQ7 family. Fe cation serves as cofactor.

It is found in the cell membrane. The catalysed reaction is a 5-methoxy-2-methyl-3-(all-trans-polyprenyl)benzene-1,4-diol + AH2 + O2 = a 3-demethylubiquinol + A + H2O. It participates in cofactor biosynthesis; ubiquinone biosynthesis. In terms of biological role, catalyzes the hydroxylation of 2-nonaprenyl-3-methyl-6-methoxy-1,4-benzoquinol during ubiquinone biosynthesis. The chain is 3-demethoxyubiquinol 3-hydroxylase from Cupriavidus pinatubonensis (strain JMP 134 / LMG 1197) (Cupriavidus necator (strain JMP 134)).